The sequence spans 318 residues: Inactive dihydropteroate synthase 2 (318 aa).

Residues 1-25 (MRSTPPASAGRSTPPALAGHSTPPA) form a disordered region. The region spanning 42–299 (ALIMAIVNRT…EVAATRRVLE (258 aa)) is the Pterin-binding domain.

Belongs to the DHPS family. In terms of assembly, homodimer.

Functionally, has very low affinity for the DHPS substrate 6-hydroxymethyl-7,8-dihydropterin-pyrophosphate, but can bind the inhibitor dapsone. Seems to lack dihydropteroate synthase activity, and does probably not function in folate metabolism. This Mycobacterium bovis (strain ATCC BAA-935 / AF2122/97) protein is Inactive dihydropteroate synthase 2 (folP2).